We begin with the raw amino-acid sequence, 550 residues long: Glucose-6-phosphate isomerase 1 (550 aa).

E358 serves as the catalytic Proton donor. Active-site residues include H389 and K513.

This sequence belongs to the GPI family.

Its subcellular location is the cytoplasm. It carries out the reaction alpha-D-glucose 6-phosphate = beta-D-fructose 6-phosphate. The protein operates within carbohydrate biosynthesis; gluconeogenesis. It participates in carbohydrate degradation; glycolysis; D-glyceraldehyde 3-phosphate and glycerone phosphate from D-glucose: step 2/4. Its function is as follows. Catalyzes the reversible isomerization of glucose-6-phosphate to fructose-6-phosphate. This chain is Glucose-6-phosphate isomerase 1, found in Streptomyces coelicolor (strain ATCC BAA-471 / A3(2) / M145).